A 551-amino-acid polypeptide reads, in one-letter code: uncharacterized protein (551 aa).

The next 6 helical transmembrane spans lie at 1–21, 25–45, 99–119, 124–144, 266–286, and 490–510; these read MIAY…IVNS, WTYF…LMVS, GALF…FGFN, LGVL…SLMW, FAFL…GVFY, and FLDL…SAED.

It localises to the cell membrane. This is an uncharacterized protein from Haemophilus influenzae (strain ATCC 51907 / DSM 11121 / KW20 / Rd).